The following is a 201-amino-acid chain: MLAFTLRFIKNKRYLATLAGALVIIAGLTSQHAWSGNGLPQINGKALAALAKQHPVVVLFRHAERCDRSDNTCLSDSTGITVNGAQDARALGKAFSADIQNYNLYSSNTVRTIQSATWFSAGRSFTVDKKMMDCGSGIYASINTLLKKSQNKNIVIFTHNHCLTYIAKNKRGVKFDPDYLNALVMHAENGKLFLDGEFVPG.

The first 35 residues, 1–35 (MLAFTLRFIKNKRYLATLAGALVIIAGLTSQHAWS), serve as a signal peptide directing secretion.

It belongs to the phosphoglycerate mutase family. Ais subfamily.

It is found in the periplasm. It participates in bacterial outer membrane biogenesis; lipopolysaccharide metabolism. Its function is as follows. Catalyzes the dephosphorylation of heptose(II) of the outer membrane lipopolysaccharide core. The sequence is that of Lipopolysaccharide core heptose(II)-phosphate phosphatase from Salmonella paratyphi A (strain AKU_12601).